The primary structure comprises 270 residues: Glucosamine-6-phosphate deaminase (270 aa).

The active-site Proton acceptor; for enolization step is the aspartate 68. Catalysis depends on aspartate 145, which acts as the For ring-opening step. The Proton acceptor; for ring-opening step role is filled by histidine 147. Glutamate 152 serves as the catalytic For ring-opening step.

This sequence belongs to the glucosamine/galactosamine-6-phosphate isomerase family. NagB subfamily.

The enzyme catalyses alpha-D-glucosamine 6-phosphate + H2O = beta-D-fructose 6-phosphate + NH4(+). Its pathway is amino-sugar metabolism; N-acetylneuraminate degradation; D-fructose 6-phosphate from N-acetylneuraminate: step 5/5. Catalyzes the reversible isomerization-deamination of glucosamine 6-phosphate (GlcN6P) to form fructose 6-phosphate (Fru6P) and ammonium ion. The chain is Glucosamine-6-phosphate deaminase from Bifidobacterium longum (strain DJO10A).